The primary structure comprises 192 residues: Fe/S biogenesis protein NfuA (192 aa).

Cys-149 and Cys-152 together coordinate [4Fe-4S] cluster.

This sequence belongs to the NfuA family. In terms of assembly, homodimer. It depends on [4Fe-4S] cluster as a cofactor.

In terms of biological role, involved in iron-sulfur cluster biogenesis. Binds a 4Fe-4S cluster, can transfer this cluster to apoproteins, and thereby intervenes in the maturation of Fe/S proteins. Could also act as a scaffold/chaperone for damaged Fe/S proteins. In Alteromonas mediterranea (strain DSM 17117 / CIP 110805 / LMG 28347 / Deep ecotype), this protein is Fe/S biogenesis protein NfuA.